A 225-amino-acid chain; its full sequence is Cytochrome c oxidase subunit 2 (225 aa).

Residues 1-26 lie on the Mitochondrial intermembrane side of the membrane; it reads MMTWSQMSFSDMNSPIMEQMVFFHDH. Residues 27-48 form a helical membrane-spanning segment; that stretch reads SMMIILMITILTIYMITNIMMN. At 49–62 the chain is on the mitochondrial matrix side; the sequence is NLLSRSMMEGQEIE. The chain crosses the membrane as a helical span at residues 63-82; sequence IIWTIIPAITLIFIAIPSLH. Topologically, residues 83-225 are mitochondrial intermembrane; it reads LLYLTDETFN…KNFINFINSS (143 aa). Positions 160, 195, 197, 199, 203, and 206 each coordinate Cu cation. Residue glutamate 197 coordinates Mg(2+).

The protein belongs to the cytochrome c oxidase subunit 2 family. In terms of assembly, component of the cytochrome c oxidase (complex IV, CIV), a multisubunit enzyme composed of a catalytic core of 3 subunits and several supernumerary subunits. The complex exists as a monomer or a dimer and forms supercomplexes (SCs) in the inner mitochondrial membrane with ubiquinol-cytochrome c oxidoreductase (cytochrome b-c1 complex, complex III, CIII). It depends on Cu cation as a cofactor.

Its subcellular location is the mitochondrion inner membrane. The enzyme catalyses 4 Fe(II)-[cytochrome c] + O2 + 8 H(+)(in) = 4 Fe(III)-[cytochrome c] + 2 H2O + 4 H(+)(out). In terms of biological role, component of the cytochrome c oxidase, the last enzyme in the mitochondrial electron transport chain which drives oxidative phosphorylation. The respiratory chain contains 3 multisubunit complexes succinate dehydrogenase (complex II, CII), ubiquinol-cytochrome c oxidoreductase (cytochrome b-c1 complex, complex III, CIII) and cytochrome c oxidase (complex IV, CIV), that cooperate to transfer electrons derived from NADH and succinate to molecular oxygen, creating an electrochemical gradient over the inner membrane that drives transmembrane transport and the ATP synthase. Cytochrome c oxidase is the component of the respiratory chain that catalyzes the reduction of oxygen to water. Electrons originating from reduced cytochrome c in the intermembrane space (IMS) are transferred via the dinuclear copper A center (CU(A)) of subunit 2 and heme A of subunit 1 to the active site in subunit 1, a binuclear center (BNC) formed by heme A3 and copper B (CU(B)). The BNC reduces molecular oxygen to 2 water molecules using 4 electrons from cytochrome c in the IMS and 4 protons from the mitochondrial matrix. The polypeptide is Cytochrome c oxidase subunit 2 (COII) (Rhipicephalus sanguineus (Brown dog tick)).